The following is a 167-amino-acid chain: Ribosome rescue factor SmrB (167 aa).

A Smr domain is found at 91–166 (LDLHGLTREQ…GEAAILILVD (76 aa)).

This sequence belongs to the SmrB family. Associates with collided ribosomes, but not with correctly translating polysomes.

In terms of biological role, acts as a ribosome collision sensor. Detects stalled/collided disomes (pairs of ribosomes where the leading ribosome is stalled and a second ribosome has collided with it) and endonucleolytically cleaves mRNA at the 5' boundary of the stalled ribosome. Stalled/collided disomes form a new interface (primarily via the 30S subunits) that binds SmrB. Cleaved mRNA becomes available for tmRNA ligation, leading to ribosomal subunit dissociation and rescue of stalled ribosomes. The protein is Ribosome rescue factor SmrB of Haemophilus influenzae (strain ATCC 51907 / DSM 11121 / KW20 / Rd).